Reading from the N-terminus, the 562-residue chain is Eukaryotic translation initiation factor 3 subunit L (562 aa).

In terms of domain architecture, PCI spans 329–535; the sequence is DAIRVFANIL…IHIADTKVAR (207 aa).

The protein belongs to the eIF-3 subunit L family. In terms of assembly, component of the eukaryotic translation initiation factor 3 (eIF-3) complex, which is composed of 13 subunits: eif3a, eif3b, eif3c, eif3d, eif3e, eif3f, eif3g, eif3h, eif3i, eif3j, eif3k, eif3l and eif3m.

It is found in the cytoplasm. Component of the eukaryotic translation initiation factor 3 (eIF-3) complex, which is involved in protein synthesis of a specialized repertoire of mRNAs and, together with other initiation factors, stimulates binding of mRNA and methionyl-tRNAi to the 40S ribosome. The eIF-3 complex specifically targets and initiates translation of a subset of mRNAs involved in cell proliferation. The sequence is that of Eukaryotic translation initiation factor 3 subunit L (eif3l) from Xenopus tropicalis (Western clawed frog).